Reading from the N-terminus, the 911-residue chain is Inositol 1,4,5-triphosphate receptor associated 1 (911 aa).

Residues 1-11 (MVKAPQSEERL) are compositionally biased toward basic and acidic residues. Disordered stretches follow at residues 1–21 (MVKA…NNSV), 39–122 (EVPG…HRHL), 174–405 (LTRR…GPRL), and 478–498 (EQEK…ESKG). Residues 68 to 86 (AAQSPAGQDPATTGISCSP) are compositionally biased toward polar residues. A compositionally biased stretch (basic residues) spans 111–122 (HSPHRRLSHRHL). Ser-118 is subject to Phosphoserine. The segment at 152–184 (SEEDKKKNLALLEEAKLVSERFLTRRGRKSRSS) is interaction with PRKG1. A compositionally biased stretch (polar residues) spans 183–212 (SSPGESSPAVSPNLSPGASPASSQSNSLTV). Residues 277–292 (TVEKSKEITIEQKENF) show a composition bias toward basic and acidic residues. Phosphoserine is present on Ser-393. The segment at 534–580 (NVFVQLSLAFRNDSYTLESRINQAERERNLTEENTEKELENFKASIT) is interaction with ITPR1. The stretch at 547 to 645 (SYTLESRINQ…MQYVENLKRT (99 aa)) forms a coiled coil. 2 positions are modified to phosphoserine: Ser-683 and Ser-696. 2 disordered regions span residues 706-766 (LNLP…TPSC) and 787-829 (YQEG…KEQR). The segment covering 708 to 728 (LPGQSPSSSPIPSLPALSESS) has biased composition (low complexity). Basic and acidic residues predominate over residues 790 to 801 (GLKKTKELQGLR). The segment covering 802-825 (EEEEEQKSESPEEPEEVAETEEEE) has biased composition (acidic residues). Residues 853–873 (VIWMMAAAMLVLTVVLGLYGS) traverse the membrane as a helical segment.

In terms of assembly, interacts with PRKG1/cGKI-beta and ITPR1/IP3R type I. Part of cGMP kinase signaling complex at least composed of ACTA2/alpha-actin, CNN1/calponin H1, PLN/phospholamban, PRKG1 and ITPR1. Interacts with HCN4; regulates HCN4 channel activity. Post-translationally, phosphorylated by PRKG1/cGKI-beta. Phosphorylation at Ser-696 is necessary for PRKG1-induced calcium release in the cytosol. Highly expressed in trachea, aorta and uterus.

It localises to the sarcoplasmic reticulum. It is found in the cytoplasm. The protein resides in the perinuclear region. The protein localises to the membrane. Its function is as follows. Plays a role as NO/PRKG1-dependent regulator of IP3-induced calcium release; its phosphorylation by PRKG1 inhibits bradykinin and IP3-induced calcium release from intracellular stores. Recruits PRKG1 to the endoplasmic reticulum and may mediate the assembly of PRKG1 and ITPR1 in a macrocomplex. Involved in PRKG1 signaling cascade leading to inhibition of platelet activation and aggregation. Also mediates NO-dependent inhibition of calcium signaling in gastrointestinal smooth muscle contributing to NO-dependent relaxation. Plays a role in the regulation of cellular excitability by regulating the hyperpolarization-activated cyclic nucleotide-gated HCN4 channel activity. The sequence is that of Inositol 1,4,5-triphosphate receptor associated 1 (IRAG1) from Bos taurus (Bovine).